We begin with the raw amino-acid sequence, 440 residues long: Mitochondrial translation factor 2 (440 aa).

A mitochondrion-targeting transit peptide spans 1–15 (MIRTSSILKNCNYRY).

It localises to the mitochondrion matrix. In terms of biological role, required for the processing and/or for the stability of the CYTB and COX1 intron-containing pre-mRNAs and of the ATP6 transcript. Could be a stem-loop RNA-binding protein that plays a role in determining RNA stability. The polypeptide is Mitochondrial translation factor 2 (MTF2) (Saccharomyces cerevisiae (strain ATCC 204508 / S288c) (Baker's yeast)).